The chain runs to 124 residues: Small ribosomal subunit protein uS12 (124 aa).

Positions 1 to 32 are disordered; it reads MPTINQLVRKGRRDKTAKVKTAALKGSPQRRG. The residue at position 89 (D89) is a 3-methylthioaspartic acid. The interval 104-124 is disordered; the sequence is TQGVKGRKQARSRYGAKKEKS. Over residues 108 to 118 the composition is skewed to basic residues; that stretch reads KGRKQARSRYG.

The protein belongs to the universal ribosomal protein uS12 family. Part of the 30S ribosomal subunit. Contacts proteins S8 and S17. May interact with IF1 in the 30S initiation complex.

With S4 and S5 plays an important role in translational accuracy. Its function is as follows. Interacts with and stabilizes bases of the 16S rRNA that are involved in tRNA selection in the A site and with the mRNA backbone. Located at the interface of the 30S and 50S subunits, it traverses the body of the 30S subunit contacting proteins on the other side and probably holding the rRNA structure together. The combined cluster of proteins S8, S12 and S17 appears to hold together the shoulder and platform of the 30S subunit. The protein is Small ribosomal subunit protein uS12 of Rhodococcus jostii (strain RHA1).